Here is a 130-residue protein sequence, read N- to C-terminus: Histone H2A type 2-B (130 aa).

The disordered stretch occupies residues 1–22 (MSGRGKQGGKARAKAKSRSSRA). The residue at position 2 (S2) is an N-acetylserine. At S2 the chain carries Phosphoserine; by RPS6KA5. R4 bears the Citrulline; alternate mark. Symmetric dimethylarginine; by PRMT5; alternate is present on R4. At K6 the chain carries N6-(2-hydroxyisobutyryl)lysine. A compositionally biased stretch (basic residues) spans 7–19 (QGGKARAKAKSRS). K10 is modified (N6-(2-hydroxyisobutyryl)lysine; alternate). Residues K10 and K14 each carry the N6-(beta-hydroxybutyryl)lysine; alternate modification. K10 bears the N6-lactoyllysine; alternate mark. K10 is modified (N6-succinyllysine; alternate). Residue K14 forms a Glycyl lysine isopeptide (Lys-Gly) (interchain with G-Cter in ubiquitin); alternate linkage. A Glycyl lysine isopeptide (Lys-Gly) (interchain with G-Cter in ubiquitin) cross-link involves residue K16. K37 carries the N6-(2-hydroxyisobutyryl)lysine; alternate modification. Position 37 is an N6-(beta-hydroxybutyryl)lysine; alternate (K37). N6-crotonyllysine; alternate is present on K37. 2 positions are modified to N6-(2-hydroxyisobutyryl)lysine: K75 and K76. K96 carries the post-translational modification N6-(2-hydroxyisobutyryl)lysine; alternate. Position 96 is an N6-(beta-hydroxybutyryl)lysine; alternate (K96). The residue at position 96 (K96) is an N6-succinyllysine; alternate. Residue K96 is modified to N6-glutaryllysine; alternate. Q105 carries the post-translational modification N5-methylglutamine. K119 is subject to N6-(2-hydroxyisobutyryl)lysine; alternate. N6-(beta-hydroxybutyryl)lysine; alternate is present on K119. An N6-crotonyllysine; alternate mark is found at K119 and K120. K119 and K120 each carry N6-glutaryllysine; alternate. K120 participates in a covalent cross-link: Glycyl lysine isopeptide (Lys-Gly) (interchain with G-Cter in ubiquitin); alternate. T121 is modified (phosphothreonine; by DCAF1).

This sequence belongs to the histone H2A family. In terms of assembly, the nucleosome is a histone octamer containing two molecules each of H2A, H2B, H3 and H4 assembled in one H3-H4 heterotetramer and two H2A-H2B heterodimers. The octamer wraps approximately 147 bp of DNA. Deiminated on Arg-4 in granulocytes upon calcium entry. Post-translationally, monoubiquitination of Lys-120 (H2AK119Ub) by RING1, TRIM37 and RNF2/RING2 complex gives a specific tag for epigenetic transcriptional repression and participates in X chromosome inactivation of female mammals. It is involved in the initiation of both imprinted and random X inactivation. Ubiquitinated H2A is enriched in inactive X chromosome chromatin. Ubiquitination of H2A functions downstream of methylation of 'Lys-27' of histone H3 (H3K27me). H2AK119Ub by RNF2/RING2 can also be induced by ultraviolet and may be involved in DNA repair. Monoubiquitination of Lys-120 (H2AK119Ub) by TRIM37 may promote transformation of cells in a number of breast cancers. Following DNA double-strand breaks (DSBs), it is ubiquitinated through 'Lys-63' linkage of ubiquitin moieties by the E2 ligase UBE2N and the E3 ligases RNF8 and RNF168, leading to the recruitment of repair proteins to sites of DNA damage. Ubiquitination at Lys-14 and Lys-16 (H2AK13Ub and H2AK15Ub, respectively) in response to DNA damage is initiated by RNF168 that mediates monoubiquitination at these 2 sites, and 'Lys-63'-linked ubiquitin are then conjugated to monoubiquitin; RNF8 is able to extend 'Lys-63'-linked ubiquitin chains in vitro. Deubiquitinated by USP51 at Lys-14 and Lys-16 (H2AK13Ub and H2AK15Ub, respectively) after damaged DNA is repaired. H2AK119Ub and ionizing radiation-induced 'Lys-63'-linked ubiquitination (H2AK13Ub and H2AK15Ub) are distinct events. In terms of processing, phosphorylation on Ser-2 (H2AS1ph) is enhanced during mitosis. Phosphorylation on Ser-2 by RPS6KA5/MSK1 directly represses transcription. Acetylation of H3 inhibits Ser-2 phosphorylation by RPS6KA5/MSK1. Phosphorylation at Thr-121 (H2AT120ph) by DCAF1 is present in the regulatory region of many tumor suppresor genes and down-regulates their transcription. Symmetric dimethylation on Arg-4 by the PRDM1/PRMT5 complex may play a crucial role in the germ-cell lineage. Post-translationally, glutamine methylation at Gln-105 (H2AQ104me) by FBL is specifically dedicated to polymerase I. It is present at 35S ribosomal DNA locus and impairs binding of the FACT complex. In terms of processing, crotonylation (Kcr) is specifically present in male germ cells and marks testis-specific genes in post-meiotic cells, including X-linked genes that escape sex chromosome inactivation in haploid cells. Crotonylation marks active promoters and enhancers and confers resistance to transcriptional repressors. It is also associated with post-meiotically activated genes on autosomes. Lactylated in macrophages by EP300/P300 by using lactoyl-CoA directly derived from endogenous or exogenous lactate, leading to stimulates gene transcription.

The protein resides in the nucleus. Its subcellular location is the chromosome. In terms of biological role, core component of nucleosome. Nucleosomes wrap and compact DNA into chromatin, limiting DNA accessibility to the cellular machineries which require DNA as a template. Histones thereby play a central role in transcription regulation, DNA repair, DNA replication and chromosomal stability. DNA accessibility is regulated via a complex set of post-translational modifications of histones, also called histone code, and nucleosome remodeling. This Homo sapiens (Human) protein is Histone H2A type 2-B.